A 371-amino-acid chain; its full sequence is Probable F-box protein At1g65740 (371 aa).

The region spanning 2 to 49 (VDWSTLPEELLHFIAARSFSLVEYKRFSSICVSWHSSVSGVKKNPFHR) is the F-box domain.

The protein is Probable F-box protein At1g65740 of Arabidopsis thaliana (Mouse-ear cress).